A 325-amino-acid chain; its full sequence is Glutarate 2-hydroxylase (325 aa).

Fe cation contacts are provided by H160, D162, and H292.

The protein belongs to the glutarate hydroxylase family. In terms of assembly, homotetramer. Requires Fe(2+) as cofactor.

It catalyses the reaction glutarate + 2-oxoglutarate + O2 = (S)-2-hydroxyglutarate + succinate + CO2. Its pathway is amino-acid degradation. Acts as an alpha-ketoglutarate-dependent dioxygenase catalyzing hydroxylation of glutarate (GA) to L-2-hydroxyglutarate (L2HG). Functions in a L-lysine degradation pathway that proceeds via cadaverine, glutarate and L-2-hydroxyglutarate. In Escherichia coli (strain K12 / MC4100 / BW2952), this protein is Glutarate 2-hydroxylase.